The primary structure comprises 30 residues: APWLVPSQITTCCGYNPGTMCPSCMCTNTC.

At Pro2 the chain carries 4-hydroxyproline. O-linked (HexNAc...) serine glycosylation occurs at Ser7. Cystine bridges form between Cys12–Cys21, Cys13–Cys26, and Cys24–Cys30. A 4-hydroxyproline mark is found at Pro17 and Pro22.

In terms of processing, O-glycosylated at Ser-7 by a core type 9 glycan, containing both D- and L-galactose units (alpha-L-Galp-(1-&gt;4)-alpha-D- GlcpNAc-(1-&gt;6)-[alpha-L-Galp-(1-&gt;2)-bets-D-Galp-(1-&gt;3)-]alpha-D-GalpNAc-(1-&gt;O)). Expressed by the venom duct.

The protein localises to the secreted. In terms of biological role, may specifically activate neuronal voltage-gated sodium channels (Nav) at the resting membrane potential. Causes a marked contraction and extension of the caudal and dorsal fins in fish and noticeable spontaneous contractions of isolated frog neuromuscular preparations. The sequence is that of Conotoxin CcTx from Conus consors (Singed cone).